Consider the following 185-residue polypeptide: Putative manganese efflux pump MntP (185 aa).

6 helical membrane-spanning segments follow: residues 6-26 (IFII…ACGL), 41-61 (FHFG…GLTV), 65-85 (VETY…GKMI), 107-127 (LVFL…SFSI), 132-152 (IAFP…FGLW), and 164-184 (SHIA…KLLL).

Belongs to the MntP (TC 9.B.29) family.

The protein localises to the cell inner membrane. Probably functions as a manganese efflux pump. This Maridesulfovibrio salexigens (strain ATCC 14822 / DSM 2638 / NCIMB 8403 / VKM B-1763) (Desulfovibrio salexigens) protein is Putative manganese efflux pump MntP.